Here is a 682-residue protein sequence, read N- to C-terminus: Potassium-transporting ATPase ATP-binding subunit (682 aa).

The next 4 membrane-spanning stretches (helical) occupy residues 34 to 54 (PVMF…IAMA), 62 to 82 (ALFS…ANFA), 219 to 239 (IALT…TATL), and 254 to 274 (VLVA…LSAI). Residue D307 is the 4-aspartylphosphate intermediate of the active site. Residues D344, E348, 377 to 384 (FTAQSRMS), and K395 contribute to the ATP site. Mg(2+)-binding residues include D518 and D522. 3 consecutive transmembrane segments (helical) span residues 588–608 (FAII…LNIM), 616–636 (AILS…PLAL), and 656–676 (IYGL…DLLL).

The protein belongs to the cation transport ATPase (P-type) (TC 3.A.3) family. Type IA subfamily. As to quaternary structure, the system is composed of three essential subunits: KdpA, KdpB and KdpC.

It is found in the cell inner membrane. It carries out the reaction K(+)(out) + ATP + H2O = K(+)(in) + ADP + phosphate + H(+). In terms of biological role, part of the high-affinity ATP-driven potassium transport (or Kdp) system, which catalyzes the hydrolysis of ATP coupled with the electrogenic transport of potassium into the cytoplasm. This subunit is responsible for energy coupling to the transport system and for the release of the potassium ions to the cytoplasm. The protein is Potassium-transporting ATPase ATP-binding subunit of Escherichia coli O139:H28 (strain E24377A / ETEC).